The chain runs to 348 residues: Alanine racemase (348 aa).

Lys-34 (proton acceptor; specific for D-alanine) is an active-site residue. Lys-34 is subject to N6-(pyridoxal phosphate)lysine. Position 127 (Arg-127) interacts with substrate. Tyr-243 serves as the catalytic Proton acceptor; specific for L-alanine. Met-291 contacts substrate.

This sequence belongs to the alanine racemase family. Pyridoxal 5'-phosphate is required as a cofactor.

It carries out the reaction L-alanine = D-alanine. It participates in amino-acid biosynthesis; D-alanine biosynthesis; D-alanine from L-alanine: step 1/1. Functionally, catalyzes the interconversion of L-alanine and D-alanine. May also act on other amino acids. The sequence is that of Alanine racemase (alr) from Coprothermobacter proteolyticus (strain ATCC 35245 / DSM 5265 / OCM 4 / BT).